The following is a 194-amino-acid chain: Imidazoleglycerol-phosphate dehydratase (194 aa).

It belongs to the imidazoleglycerol-phosphate dehydratase family.

It localises to the cytoplasm. The enzyme catalyses D-erythro-1-(imidazol-4-yl)glycerol 3-phosphate = 3-(imidazol-4-yl)-2-oxopropyl phosphate + H2O. Its pathway is amino-acid biosynthesis; L-histidine biosynthesis; L-histidine from 5-phospho-alpha-D-ribose 1-diphosphate: step 6/9. The protein is Imidazoleglycerol-phosphate dehydratase of Thermus thermophilus (strain ATCC BAA-163 / DSM 7039 / HB27).